The chain runs to 546 residues: Phenylalanine--tRNA ligase beta subunit (546 aa).

The B5 domain occupies 266–342 (LAPAERVVSV…IAYGIENFDA (77 aa)). Positions 320, 326, 329, and 330 each coordinate Mg(2+).

This sequence belongs to the phenylalanyl-tRNA synthetase beta subunit family. Type 2 subfamily. As to quaternary structure, tetramer of two alpha and two beta subunits. Requires Mg(2+) as cofactor.

It localises to the cytoplasm. The enzyme catalyses tRNA(Phe) + L-phenylalanine + ATP = L-phenylalanyl-tRNA(Phe) + AMP + diphosphate + H(+). The chain is Phenylalanine--tRNA ligase beta subunit from Methanoculleus marisnigri (strain ATCC 35101 / DSM 1498 / JR1).